We begin with the raw amino-acid sequence, 148 residues long: Large ribosomal subunit protein uL15 (148 aa).

The disordered stretch occupies residues Met1 to Val61.

It belongs to the universal ribosomal protein uL15 family. As to quaternary structure, part of the 50S ribosomal subunit.

Its function is as follows. Binds to the 23S rRNA. This Thermodesulfovibrio yellowstonii (strain ATCC 51303 / DSM 11347 / YP87) protein is Large ribosomal subunit protein uL15.